Reading from the N-terminus, the 146-residue chain is D-aminoacyl-tRNA deacylase (146 aa).

Residues 137-138 (GP) carry the Gly-cisPro motif, important for rejection of L-amino acids motif.

It belongs to the DTD family. Homodimer.

The protein localises to the cytoplasm. It catalyses the reaction glycyl-tRNA(Ala) + H2O = tRNA(Ala) + glycine + H(+). The catalysed reaction is a D-aminoacyl-tRNA + H2O = a tRNA + a D-alpha-amino acid + H(+). In terms of biological role, an aminoacyl-tRNA editing enzyme that deacylates mischarged D-aminoacyl-tRNAs. Also deacylates mischarged glycyl-tRNA(Ala), protecting cells against glycine mischarging by AlaRS. Acts via tRNA-based rather than protein-based catalysis; rejects L-amino acids rather than detecting D-amino acids in the active site. By recycling D-aminoacyl-tRNA to D-amino acids and free tRNA molecules, this enzyme counteracts the toxicity associated with the formation of D-aminoacyl-tRNA entities in vivo and helps enforce protein L-homochirality. The polypeptide is D-aminoacyl-tRNA deacylase (Halalkalibacterium halodurans (strain ATCC BAA-125 / DSM 18197 / FERM 7344 / JCM 9153 / C-125) (Bacillus halodurans)).